We begin with the raw amino-acid sequence, 1235 residues long: ATP-dependent helicase/nuclease subunit A (1235 aa).

The region spanning 12–482 (ALWTDDQWKA…IDLSQNFRSR (471 aa)) is the UvrD-like helicase ATP-binding domain. Position 33 to 40 (33 to 40 (AAAGSGKT)) interacts with ATP. Residues 509–800 (AAELTLGASF…RMMTIHASKG (292 aa)) enclose the UvrD-like helicase C-terminal domain.

This sequence belongs to the helicase family. AddA subfamily. In terms of assembly, heterodimer of AddA and AddB/RexB. Mg(2+) is required as a cofactor.

The catalysed reaction is Couples ATP hydrolysis with the unwinding of duplex DNA by translocating in the 3'-5' direction.. It catalyses the reaction ATP + H2O = ADP + phosphate + H(+). Its function is as follows. The heterodimer acts as both an ATP-dependent DNA helicase and an ATP-dependent, dual-direction single-stranded exonuclease. Recognizes the chi site generating a DNA molecule suitable for the initiation of homologous recombination. The AddA nuclease domain is required for chi fragment generation; this subunit has the helicase and 3' -&gt; 5' nuclease activities. In Listeria innocua serovar 6a (strain ATCC BAA-680 / CLIP 11262), this protein is ATP-dependent helicase/nuclease subunit A.